The sequence spans 501 residues: Lysine--tRNA ligase (501 aa).

2 residues coordinate Mg(2+): Glu402 and Glu409.

It belongs to the class-II aminoacyl-tRNA synthetase family. In terms of assembly, homodimer. It depends on Mg(2+) as a cofactor.

It is found in the cytoplasm. It catalyses the reaction tRNA(Lys) + L-lysine + ATP = L-lysyl-tRNA(Lys) + AMP + diphosphate. The protein is Lysine--tRNA ligase of Helicobacter pylori (strain G27).